The primary structure comprises 346 residues: 4-hydroxy-3-methylbut-2-enyl diphosphate reductase (346 aa).

Residue cysteine 19 coordinates [4Fe-4S] cluster. Histidine 48 and histidine 84 together coordinate (2E)-4-hydroxy-3-methylbut-2-enyl diphosphate. Dimethylallyl diphosphate is bound by residues histidine 48 and histidine 84. Residues histidine 48 and histidine 84 each coordinate isopentenyl diphosphate. Cysteine 106 is a [4Fe-4S] cluster binding site. Histidine 134 is a (2E)-4-hydroxy-3-methylbut-2-enyl diphosphate binding site. Position 134 (histidine 134) interacts with dimethylallyl diphosphate. Residue histidine 134 coordinates isopentenyl diphosphate. The active-site Proton donor is the glutamate 136. A (2E)-4-hydroxy-3-methylbut-2-enyl diphosphate-binding site is contributed by threonine 175. Cysteine 205 is a binding site for [4Fe-4S] cluster. (2E)-4-hydroxy-3-methylbut-2-enyl diphosphate-binding residues include serine 233, serine 234, asparagine 235, and serine 278. Dimethylallyl diphosphate is bound by residues serine 233, serine 234, asparagine 235, and serine 278. Residues serine 233, serine 234, asparagine 235, and serine 278 each coordinate isopentenyl diphosphate.

This sequence belongs to the IspH family. Requires [4Fe-4S] cluster as cofactor.

The enzyme catalyses isopentenyl diphosphate + 2 oxidized [2Fe-2S]-[ferredoxin] + H2O = (2E)-4-hydroxy-3-methylbut-2-enyl diphosphate + 2 reduced [2Fe-2S]-[ferredoxin] + 2 H(+). It carries out the reaction dimethylallyl diphosphate + 2 oxidized [2Fe-2S]-[ferredoxin] + H2O = (2E)-4-hydroxy-3-methylbut-2-enyl diphosphate + 2 reduced [2Fe-2S]-[ferredoxin] + 2 H(+). Its pathway is isoprenoid biosynthesis; dimethylallyl diphosphate biosynthesis; dimethylallyl diphosphate from (2E)-4-hydroxy-3-methylbutenyl diphosphate: step 1/1. The protein operates within isoprenoid biosynthesis; isopentenyl diphosphate biosynthesis via DXP pathway; isopentenyl diphosphate from 1-deoxy-D-xylulose 5-phosphate: step 6/6. In terms of biological role, catalyzes the conversion of 1-hydroxy-2-methyl-2-(E)-butenyl 4-diphosphate (HMBPP) into a mixture of isopentenyl diphosphate (IPP) and dimethylallyl diphosphate (DMAPP). Acts in the terminal step of the DOXP/MEP pathway for isoprenoid precursor biosynthesis. The chain is 4-hydroxy-3-methylbut-2-enyl diphosphate reductase from Brucella melitensis biotype 1 (strain ATCC 23456 / CCUG 17765 / NCTC 10094 / 16M).